A 641-amino-acid polypeptide reads, in one-letter code: Phosphomethylpyrimidine synthase (641 aa).

A compositionally biased stretch (polar residues) spans Met-1 to Ala-13. Residues Met-1–Ser-21 are disordered. Substrate-binding positions include Asn-221, Met-250, Tyr-279, His-315, Ser-335–Gly-337, Asp-376–Arg-379, and Glu-415. A Zn(2+)-binding site is contributed by His-419. A substrate-binding site is contributed by Tyr-442. His-483 is a binding site for Zn(2+). The [4Fe-4S] cluster site is built by Cys-563, Cys-566, and Cys-571.

The protein belongs to the ThiC family. As to quaternary structure, homodimer. Requires [4Fe-4S] cluster as cofactor.

The enzyme catalyses 5-amino-1-(5-phospho-beta-D-ribosyl)imidazole + S-adenosyl-L-methionine = 4-amino-2-methyl-5-(phosphooxymethyl)pyrimidine + CO + 5'-deoxyadenosine + formate + L-methionine + 3 H(+). Its pathway is cofactor biosynthesis; thiamine diphosphate biosynthesis. In terms of biological role, catalyzes the synthesis of the hydroxymethylpyrimidine phosphate (HMP-P) moiety of thiamine from aminoimidazole ribotide (AIR) in a radical S-adenosyl-L-methionine (SAM)-dependent reaction. The protein is Phosphomethylpyrimidine synthase of Rhodopseudomonas palustris (strain BisB5).